Here is a 1073-residue protein sequence, read N- to C-terminus: Ring-infected erythrocyte surface antigen (1073 aa).

The first 65 residues, 1–65, serve as a signal peptide directing secretion; it reads MRPFHAYSWI…IIGILYIILN (65 aa). An N-linked (GlcNAc...) asparagine glycan is attached at N71. Acidic residues predominate over residues 428-444; the sequence is DTSEEESVEENEEEHTV. The interval 428-514 is disordered; the sequence is DTSEEESVEE…SDVQQTSEAA (87 aa). Residues 436 to 504 form a tandem repeats 1 region; that stretch reads EENEEEHTVD…VAEEHVEEPA (69 aa). Residues 445-456 show a composition bias toward basic and acidic residues; that stretch reads DDEHVEEHTADD. A compositionally biased stretch (acidic residues) spans 457-470; it reads EHVEEPTVADDEHV. The span at 476 to 502 shows a compositional bias: basic and acidic residues; it reads ADEHVEEPTVAEEHVEEPTVAEEHVEE. A J domain is found at 521–589; that stretch reads DTLYYDILGV…KRWYNKYGYD (69 aa). N-linked (GlcNAc...) asparagine glycosylation is found at N639, N773, and N777. The segment at 891–1073 is tandem repeats 2; it reads NAEENVEHDA…VEEHNEEYDE (183 aa). A compositionally biased stretch (basic and acidic residues) spans 894–930; sequence ENVEHDAEENVEHDAEENVEHDAEENVEHDAEENVEH. The disordered stretch occupies residues 894 to 1073; the sequence is ENVEHDAEEN…VEEHNEEYDE (180 aa). Residues 931–1073 show a composition bias toward acidic residues; that stretch reads DAEENVEENV…VEEHNEEYDE (143 aa).

The Tyr residues in the variant tetrameric sequences in the RESA repeat are possibly phosphorylated (by homology with band 3).

It localises to the cell membrane. Functionally, may disrupt the normal intermolecular interactions of the cytoplasmic domain of band 3 and thereby facilitate the invagination of the red cell membrane which is necessary for the formation of the parasitophorous vacuole. This is Ring-infected erythrocyte surface antigen (RESA) from Plasmodium falciparum (isolate FC27 / Papua New Guinea).